The sequence spans 618 residues: Glucose starvation modulator protein 1 (618 aa).

The zn(2)-C6 fungal-type DNA-binding region spans 20–48 (CEFCHTKHIQCDVGRPCQNCLKRNIGKFC). A disordered region spans residues 325-352 (ANANTHPSHNAKLESECDSSSHSDADLE). Residues 335-352 (AKLESECDSSSHSDADLE) are compositionally biased toward basic and acidic residues. One can recognise a PAS domain in the interval 466 to 538 (LLDLENMAKL…QIFNELLAFG (73 aa)).

It belongs to the ERT1/acuK family.

The protein localises to the nucleus. Functionally, transcription factor which regulates nonfermentable carbon utilization. Binds specifically to 5'-CGGN(8)CGG-3' and 5'-CGGN(9)CGG-3' sequences in the promoter region. This is Glucose starvation modulator protein 1 (GSM1) from Saccharomyces cerevisiae (strain ATCC 204508 / S288c) (Baker's yeast).